A 91-amino-acid polypeptide reads, in one-letter code: MGILLSICRRRHDPLTDVEGQPINVREEFEMFEEGDEATEACVFLNPNMGTDEYDEEDEGGDGGEGREPQPEVKTTPYPKRKKIKLKADVL.

Residue glycine 2 is the site of N-myristoyl glycine; by host attachment. The tract at residues 48-81 is disordered; the sequence is NMGTDEYDEEDEGGDGGEGREPQPEVKTTPYPKR. Positions 52–62 are enriched in acidic residues; that stretch reads DEYDEEDEGGD.

Belongs to the herpesviridae cytoplasmic envelopment protein 3 family. In terms of assembly, interacts with cytoplasmic envelopment protein 2; this interaction is essential for the proper localization of each protein to the assembly complex and thus for the production of infectious virus. Myristoylation and palmitoylation (probably on one or more of the nearby cysteines at the N-terminus) enable membrane-binding and Golgi apparatus-specific targeting and are essential for efficient packaging. In terms of processing, phosphorylated. Phosphorylation does not seem to be required for recycling to the host Golgi apparatus. Packaging is selective for underphosphorylated forms.

Its subcellular location is the virion tegument. It localises to the virion membrane. The protein localises to the host cell membrane. It is found in the host Golgi apparatus membrane. Plays an important role in the cytoplasmic envelopment of tegument proteins and capsids during the assembly and egress processes. Also participates in viral entry at the fusion step probably by regulating the core fusion machinery. The chain is Cytoplasmic envelopment protein 3 (38) from Equus caballus (Horse).